A 154-amino-acid chain; its full sequence is UPF0178 protein BAV3236 (154 aa).

It belongs to the UPF0178 family.

This chain is UPF0178 protein BAV3236, found in Bordetella avium (strain 197N).